Consider the following 1024-residue polypeptide: Beta-galactosidase (1024 aa).

Substrate-binding residues include Asn103 and Asp202. Asp202 is a binding site for Na(+). Mg(2+) contacts are provided by Glu417, His419, and Glu462. Residues Glu462 and 538–541 (EYAH) each bind substrate. The active-site Proton donor is Glu462. Catalysis depends on Glu538, which acts as the Nucleophile. Asn598 is a binding site for Mg(2+). Positions 602 and 605 each coordinate Na(+). 2 residues coordinate substrate: Asn605 and Trp1000.

This sequence belongs to the glycosyl hydrolase 2 family. In terms of assembly, homotetramer. It depends on Mg(2+) as a cofactor. Na(+) serves as cofactor.

It catalyses the reaction Hydrolysis of terminal non-reducing beta-D-galactose residues in beta-D-galactosides.. The polypeptide is Beta-galactosidase (Escherichia coli O6:H1 (strain CFT073 / ATCC 700928 / UPEC)).